We begin with the raw amino-acid sequence, 25 residues long: Chaperonin GroEL (25 aa).

This sequence belongs to the chaperonin (HSP60) family. As to quaternary structure, forms a cylinder of 14 subunits composed of two heptameric rings stacked back-to-back. Interacts with the co-chaperonin GroES.

The protein resides in the cytoplasm. The enzyme catalyses ATP + H2O + a folded polypeptide = ADP + phosphate + an unfolded polypeptide.. Together with its co-chaperonin GroES, plays an essential role in assisting protein folding. The GroEL-GroES system forms a nano-cage that allows encapsulation of the non-native substrate proteins and provides a physical environment optimized to promote and accelerate protein folding. This is Chaperonin GroEL from Delftia acidovorans (Pseudomonas acidovorans).